We begin with the raw amino-acid sequence, 299 residues long: Taste receptor type 2 member 5 (299 aa).

Residue Met-1 is a topological domain, extracellular. The helical transmembrane segment at 2–22 (LSAGLGLLMLVAVVEFLIGLI) threads the bilayer. Residues 23–45 (GNGVLVVWSFREWMRKFNWSSYN) are Cytoplasmic-facing. A helical transmembrane segment spans residues 46–66 (LIILGLAGCRFLLQWLIILDL). The Extracellular portion of the chain corresponds to 67-82 (SLFPLFQSSRWLRYLS). Residues 83–103 (IFWVLVSQASLWFATFLSVFY) traverse the membrane as a helical segment. Residues 104–127 (CKKITTFDRPAYLWLKQRAYNLSL) lie on the Cytoplasmic side of the membrane. Residues 128–148 (WCLLGYFIINLLLTVQIGLMF) traverse the membrane as a helical segment. Residues 149 to 175 (YHPPQGNSSIRYPFESWQYLYAFRLNS) are Extracellular-facing. A glycan (N-linked (GlcNAc...) asparagine) is linked at Asn-155. The helical transmembrane segment at 176–196 (GSYLPLMVFLVSSGMLIVSLY) threads the bilayer. Residues 197–223 (THHKKMKVHSAGRRDVRAKAHITALKS) lie on the Cytoplasmic side of the membrane. Residues 224–244 (LGCFLFLHLVYIMASPFSITS) form a helical membrane-spanning segment. At 245-253 (KTYPPDLTS) the chain is on the extracellular side. The chain crosses the membrane as a helical span at residues 254–274 (VFIWETLMAAYPSLHSLILIM). Residues 275 to 299 (GIPRVKQTCQKILWKTVCARRCWGP) lie on the Cytoplasmic side of the membrane.

The protein belongs to the G-protein coupled receptor T2R family.

Its subcellular location is the membrane. In terms of biological role, receptor that may play a role in the perception of bitterness and is gustducin-linked. May play a role in sensing the chemical composition of the gastrointestinal content. The activity of this receptor may stimulate alpha gustducin, mediate PLC-beta-2 activation and lead to the gating of TRPM5. This chain is Taste receptor type 2 member 5 (TAS2R5), found in Gorilla gorilla gorilla (Western lowland gorilla).